Reading from the N-terminus, the 699-residue chain is Endogenous retrovirus group K member 19 Env polyprotein (699 aa).

A disordered region spans residues 1-47 (MNPSEMQRKAPPRRRRHRNRAPLTHKMNKMVTSEEQMKLPSTKKAEP). The N-terminal stretch at 1 to 89 (MNPSEMQRKA…ALMIVSMVVS (89 aa)) is a signal peptide. The span at 10-20 (APPRRRRHRNR) shows a compositional bias: basic residues. The Extracellular segment spans residues 90–632 (LPMPAGAAAA…NLNPVTWVKT (543 aa)). Residues asparagine 100, asparagine 128, asparagine 153, asparagine 274, asparagine 355, asparagine 372, and asparagine 461 are each glycosylated (N-linked (GlcNAc...) asparagine). Residues 466–486 (FIFTLIAVIMGLIAVTATAAV) form a fusion peptide region. Residues asparagine 507, asparagine 554, asparagine 566, and asparagine 585 are each glycosylated (N-linked (GlcNAc...) asparagine). The chain crosses the membrane as a helical span at residues 633–653 (IGSTTIINLILILVCLFCLLL). The Cytoplasmic segment spans residues 654–699 (VCRCTQQLRRDSDHRERAMMTMAVLSKRKGGNVGKSKRDQIVTVSV).

Belongs to the beta type-B retroviral envelope protein family. HERV class-II K(HML-2) env subfamily. The surface (SU) and transmembrane (TM) proteins form a heterodimer. SU and TM are attached by noncovalent interactions or by a labile interchain disulfide bond. Specific enzymatic cleavages in vivo yield the mature SU and TM proteins.

It localises to the cell membrane. The protein resides in the virion. In terms of biological role, retroviral envelope proteins mediate receptor recognition and membrane fusion during early infection. Endogenous envelope proteins may have kept, lost or modified their original function during evolution. This endogenous envelope protein has lost its original fusogenic properties. Functionally, SU mediates receptor recognition. TM anchors the envelope heterodimer to the viral membrane through one transmembrane domain. The other hydrophobic domain, called fusion peptide, mediates fusion of the viral membrane with the target cell membrane. This is Endogenous retrovirus group K member 19 Env polyprotein (ERVK-19) from Homo sapiens (Human).